We begin with the raw amino-acid sequence, 494 residues long: Putative transporter SVOPL (494 aa).

The next 10 helical transmembrane spans lie at Ile48–Ile68, Val86–Leu106, Phe121–Val141, Val179–Ile199, Trp203–Pro223, Thr281–Ala301, Ile350–Leu370, Leu385–Met405, Ala431–Ile451, and Phe460–Thr480.

Belongs to the major facilitator superfamily.

The protein resides in the membrane. The sequence is that of Putative transporter SVOPL (Svopl) from Mus musculus (Mouse).